The sequence spans 100 residues: Urease subunit gamma (100 aa).

The protein belongs to the urease gamma subunit family. As to quaternary structure, heterotrimer of UreA (gamma), UreB (beta) and UreC (alpha) subunits. Three heterotrimers associate to form the active enzyme.

The protein resides in the cytoplasm. It catalyses the reaction urea + 2 H2O + H(+) = hydrogencarbonate + 2 NH4(+). Its pathway is nitrogen metabolism; urea degradation; CO(2) and NH(3) from urea (urease route): step 1/1. The protein is Urease subunit gamma of Ralstonia nicotianae (strain ATCC BAA-1114 / GMI1000) (Ralstonia solanacearum).